The following is a 353-amino-acid chain: Photosystem II D2 protein (353 aa).

Thr-2 carries the post-translational modification N-acetylthreonine. At Thr-2 the chain carries Phosphothreonine. A helical membrane pass occupies residues 41–61; the sequence is CAYFALGGWFTGTTFVTSWYT. His-118 contacts chlorophyll a. Residues 125–141 traverse the membrane as a helical segment; it reads GFMLRQFELARSVQLRP. Pheophytin a contacts are provided by Gln-130 and Asn-143. A helical membrane pass occupies residues 153–166; that stretch reads VFVSVFLIYPLGQS. His-198 lines the chlorophyll a pocket. A helical transmembrane segment spans residues 208–228; sequence AALLCAIHGATVENTLFEDGD. A plastoquinone-binding residues include His-215 and Phe-262. His-215 serves as a coordination point for Fe cation. His-269 contacts Fe cation. The helical transmembrane segment at 279-295 threads the bilayer; sequence GLWMSALGVVGLALNLR.

Belongs to the reaction center PufL/M/PsbA/D family. PSII is composed of 1 copy each of membrane proteins PsbA, PsbB, PsbC, PsbD, PsbE, PsbF, PsbH, PsbI, PsbJ, PsbK, PsbL, PsbM, PsbT, PsbX, PsbY, PsbZ, Psb30/Ycf12, at least 3 peripheral proteins of the oxygen-evolving complex and a large number of cofactors. It forms dimeric complexes. Interacts with PAM68. Requires The D1/D2 heterodimer binds P680, chlorophylls that are the primary electron donor of PSII, and subsequent electron acceptors. It shares a non-heme iron and each subunit binds pheophytin, quinone, additional chlorophylls, carotenoids and lipids. There is also a Cl(-1) ion associated with D1 and D2, which is required for oxygen evolution. The PSII complex binds additional chlorophylls, carotenoids and specific lipids. as cofactor. In terms of processing, phosphorylation occurs in normal plant growth light conditions. Rapid dephosphorylation occurs during heat shock.

Its subcellular location is the plastid. It localises to the chloroplast thylakoid membrane. It carries out the reaction 2 a plastoquinone + 4 hnu + 2 H2O = 2 a plastoquinol + O2. Its function is as follows. Photosystem II (PSII) is a light-driven water:plastoquinone oxidoreductase that uses light energy to abstract electrons from H(2)O, generating O(2) and a proton gradient subsequently used for ATP formation. It consists of a core antenna complex that captures photons, and an electron transfer chain that converts photonic excitation into a charge separation. The D1/D2 (PsbA/PsbD) reaction center heterodimer binds P680, the primary electron donor of PSII as well as several subsequent electron acceptors. D2 is needed for assembly of a stable PSII complex. This Arabidopsis thaliana (Mouse-ear cress) protein is Photosystem II D2 protein.